A 480-amino-acid polypeptide reads, in one-letter code: ATP synthase subunit beta (480 aa).

153–160 contacts ATP; sequence GGAGVGKT.

This sequence belongs to the ATPase alpha/beta chains family. F-type ATPases have 2 components, CF(1) - the catalytic core - and CF(0) - the membrane proton channel. CF(1) has five subunits: alpha(3), beta(3), gamma(1), delta(1), epsilon(1). CF(0) has three main subunits: a(1), b(2) and c(9-12). The alpha and beta chains form an alternating ring which encloses part of the gamma chain. CF(1) is attached to CF(0) by a central stalk formed by the gamma and epsilon chains, while a peripheral stalk is formed by the delta and b chains.

The protein localises to the cell membrane. It carries out the reaction ATP + H2O + 4 H(+)(in) = ADP + phosphate + 5 H(+)(out). Its function is as follows. Produces ATP from ADP in the presence of a proton gradient across the membrane. The catalytic sites are hosted primarily by the beta subunits. The protein is ATP synthase subunit beta of Lactobacillus gasseri (strain ATCC 33323 / DSM 20243 / BCRC 14619 / CIP 102991 / JCM 1131 / KCTC 3163 / NCIMB 11718 / NCTC 13722 / AM63).